The following is a 197-amino-acid chain: Probable GTP-binding protein EngB (197 aa).

The EngB-type G domain maps to Glu26 to Leu197. GTP is bound by residues Gly34–Ser41, Gly61–Leu65, Asp79–Gly82, Thr146–Asp149, and Phe178–Ser180. 2 residues coordinate Mg(2+): Ser41 and Thr63.

It belongs to the TRAFAC class TrmE-Era-EngA-EngB-Septin-like GTPase superfamily. EngB GTPase family. Requires Mg(2+) as cofactor.

Functionally, necessary for normal cell division and for the maintenance of normal septation. This Streptococcus pneumoniae (strain CGSP14) protein is Probable GTP-binding protein EngB.